Here is a 403-residue protein sequence, read N- to C-terminus: Guanine nucleotide-binding protein alpha-8 subunit (403 aa).

G2 carries the N-myristoyl glycine lipid modification. The S-palmitoyl cysteine moiety is linked to residue C3. The 326-residue stretch at 31–356 (LDFRILLLGA…KVLMKATKDL (326 aa)) folds into the G-alpha domain. Residues 34–47 (RILLLGAGESGKST) are G1 motif. Residues 39–46 (GAGESGKS), 174–180 (IMTRVRT), 199–203 (DVGGQ), 268–271 (NKKD), and A324 contribute to the GTP site. Mg(2+)-binding residues include S46 and T180. The tract at residues 172-180 (DCIMTRVRT) is G2 motif. The segment at 195–204 (FRVVDVGGQR) is G3 motif. The segment at 264–271 (FLVLNKKD) is G4 motif. The tract at residues 322–327 (IAARYK) is G5 motif. Positions 353–403 (TKDLKKSSKQSSKSSLGNSTQNNSNNNNNNNNSNNNNGQTTIDGATAKINS) are disordered. Residues 374–389 (NNSNNNNNNNNSNNNN) show a composition bias toward low complexity. Polar residues predominate over residues 390-403 (GQTTIDGATAKINS).

This sequence belongs to the G-alpha family. G proteins are composed of 3 units; alpha, beta and gamma. The alpha chain contains the guanine nucleotide binding site.

Guanine nucleotide-binding proteins (G proteins) are involved as modulators or transducers in various transmembrane signaling systems. G alpha-8 is a potential analog for the G(s)-like G-proteins which stimulate adenylate cyclase in mammals. This is Guanine nucleotide-binding protein alpha-8 subunit (gpaH) from Dictyostelium discoideum (Social amoeba).